Here is a 583-residue protein sequence, read N- to C-terminus: Steryl-sulfatase (583 aa).

The first 21 residues, 1–21 (MPLRKMKIPFLLLFFLWEAES), serve as a signal peptide directing secretion. The Lumenal portion of the chain corresponds to 22 to 184 (HAASRPNIIL…GSVFTTGFKR (163 aa)). Residues D35 and D36 each contribute to the Ca(2+) site. An N-linked (GlcNAc...) asparagine glycan is attached at N47. Ca(2+) is bound at residue C75. The Nucleophile role is filled by C75. C75 carries the 3-oxoalanine (Cys) modification. H136 is an active-site residue. Cystine bridges form between C141–C148 and C170–C242. Residues 185–208 (LVFLPLQIVGVTLLTLAALNCLGL) form a helical membrane-spanning segment. Topologically, residues 209–212 (LHVP) are cytoplasmic. A helical transmembrane segment spans residues 213-234 (LGVFFSLLFLAALILTLFLGFL). At 235-583 (HYFRPLNCFM…REKQDKRLSR (349 aa)) the chain is on the lumenal side. N259 carries an N-linked (GlcNAc...) asparagine glycan. The Ca(2+) site is built by D342 and Q343. Disulfide bonds link C446/C489, C481/C487, C562/C570, and C563/C572.

This sequence belongs to the sulfatase family. Homodimer. Ca(2+) is required as a cofactor. Post-translationally, the conversion to 3-oxoalanine (also known as C-formylglycine, FGly), of a serine or cysteine residue in prokaryotes and of a cysteine residue in eukaryotes, is critical for catalytic activity.

The protein resides in the cytoplasmic vesicle. It is found in the secretory vesicle. Its subcellular location is the microneme membrane. It localises to the endoplasmic reticulum membrane. The catalysed reaction is dehydroepiandrosterone 3-sulfate + H2O = 3beta-hydroxyandrost-5-en-17-one + sulfate + H(+). The enzyme catalyses estrone 3-sulfate + H2O = estrone + sulfate + H(+). In terms of biological role, catalyzes the conversion of sulfated steroid precursors, such as dehydroepiandrosterone sulfate (DHEA-S) and estrone sulfate to the free steroid. The polypeptide is Steryl-sulfatase (STS) (Homo sapiens (Human)).